Here is a 167-residue protein sequence, read N- to C-terminus: MNEEKRGLCMNIRYLKNVLRKARKIDDTIQLSLNSAKWEYPEGKVHETQEERCQNVKKKLFEGWLSRDQFLKECQTIVRSQLDQDRNTSKSPLKSQQQLPSSSTTQVSERLDPYAKEVQVQLSPPEEVQIVLQSELSVEQIIRDQTWEVLTNACPGMFKDWRDTYKD.

The interval 81–108 is disordered; it reads QLDQDRNTSKSPLKSQQQLPSSSTTQVS. Over residues 89–106 the composition is skewed to low complexity; that stretch reads SKSPLKSQQQLPSSSTTQ.

It belongs to the MIX23 family.

In Schizosaccharomyces pombe (strain 972 / ATCC 24843) (Fission yeast), this protein is Protein MIX23 (cid2).